A 148-amino-acid chain; its full sequence is Calcium-regulated heat stable protein 1 (148 aa).

Residues 1-12 are compositionally biased toward pro residues; the sequence is MSSEPPPPPLQP. Residues 1–47 are disordered; sequence MSSEPPPPPLQPPTHQTSVGLLDTPRTRDRSPSPLRGNVVPSPLPTR. S2 is modified (N-acetylserine). Phosphoserine is present on residues S31, S33, and S42. Position 46 is a phosphothreonine (T46). Phosphoserine occurs at positions 53 and 59. Residues 63–130 enclose the CSD domain; it reads VYKGVCKCFC…KLQAVEVVIT (68 aa). Residue S147 is modified to Phosphoserine.

Homodimer. Interacts with STYX. Post-translationally, can be phosphorylated by DYRK2 (in vitro). Dephosphorylated by calcineurin in a Ca(2+) dependent manner.

Its subcellular location is the cytoplasm. The protein resides in the P-body. The protein localises to the cytoplasmic granule. Its function is as follows. Binds mRNA and regulates the stability of target mRNA. This chain is Calcium-regulated heat stable protein 1 (Carhsp1), found in Mus musculus (Mouse).